A 1110-amino-acid chain; its full sequence is Coiled-coil domain-containing protein 150 (1110 aa).

Coiled-coil stretches lie at residues 122-250 (LENL…TSAS), 288-313 (QDLL…SDLN), 413-695 (AAHA…KEDN), and 728-1048 (SEIA…EAHR).

The chain is Coiled-coil domain-containing protein 150 (Ccdc150) from Mus musculus (Mouse).